The chain runs to 1707 residues: MDQEGGGDGQKAPSFQWRNYKLIVDPALDPALRRPSQKVYRYDGVHFSVNDSKYIPVEDLQDPRCHVRSKNRDFSLPVPKFKLDEFYIGQIPLKEVTFARLNDNVRETFLKDMCRKYGEVEEVEILLHPRTRKHLGLARVLFTSTRGAKETVKNLHLTSVMGNIIHAQLDIKGQQRMKYYELIVNGSYTPQTVPTGGKALSEKFQGSGAATETAESRRRSSSDTAAYPAGTTAVGTPGNGTPCSQDTSFSSSRQDTPSSFGQFTPQSSQGTPYTSRGSTPYSQDSAYSSSTTSTSFKPRRSENSYQDAFSRRHFSASSASTTASTAIAATTAATASSSASSSSLSSSSSSSSSSSSSQFRSSDANYPAYYESWNRYQRHTSYPPRRATREEPPGAPFAENTAERFPPSYTSYLPPEPSRPTDQDYRPPASEAPPPEPPEPGGGGGGGGPSPEREEVRTSPRPASPARSGSPAPETTNESVPFAQHSSLDSRIEMLLKEQRSKFSFLASDTEEEEENSSMVLGARDTGSEVPSGSGHGPCTPPPAPANFEDVAPTGSGEPGATRESPKANGQNQASPCSSGDDMEISDDDRGGSPPPAPTPPQQPPPPPPPPPPPPPYLASLPLGYPPHQPAYLLPPRPDGPPPPEYPPPPPPPPHIYDFVNSLELMDRLGAQWGGMPMSFQMQTQMLTRLHQLRQGKGLIAASAGPPGGAFGEAFLPFPPPQEAAYGLPYALYAQGQEGRGAYSREAYHLPMPMAAEPLPSSSVSGEEARLPPREEAELAEGKTLPTAGTVGRVLAMLVQEMKSIMQRDLNRKMVENVAFGAFDQWWESKEEKAKPFQNAAKQQAKEEDKEKTKLKEPGLLSLVDWAKSGGTTGIEAFAFGSGLRGALRLPSFKVKRKEPSEISEASEEKRPRPSTPAEEDEDDPEQEKEAGEPGRPGTKPPKRDEERGKTQGKHRKSFALDSEGEEASQESSSEKDEEDDEEDEEDEDREEAVDTTKKETEVSDGEDEESDSSSKCSLYADSDGENDSTSDSESSSSSSSSSSSSSSSSSSSSSSSSESSSEDEEEEERPAALPSASPPPREVPVPTPAPVEVPVPERVAGSPVTPLPEQEASPARPAGPTEESPPSAPLRPPEPPAGPPAPAPRPDERPSSPIPLLPPPKKRRKTVSFSAIEVVPAPEPPPATPPQAKFPGPASRKAPRGVERTIRNLPLDHASLVKSWPEEVSRGGRSRAGGRGRLTEEEEAEPGTEVDLAVLADLALTPARRGLPALPAVEDSEATETSDEAERPRPLLSHILLEHNYALAVKPTPPAPALRPPEPVPAPAALFSSPADEVLEAPEVVVAEAEEPKPQQLQQQREEGEEEGEEEGEEEEEESSDSSSSSDGEGALRRRSLRSHARRRRPPPPPPPPPPRAYEPRSEFEQMTILYDIWNSGLDSEDMSYLRLTYERLLQQTSGADWLNDTHWVHHTITNLTTPKRKRRPQDGPREHQTGSARSEGYYPISKKEKDKYLDVCPVSARQLEGVDTQGTNRVLSERRSEQRRLLSAIGTSAIMDSDLLKLNQLKFRKKKLRFGRSRIHEWGLFAMEPIAADEMVIEYVGQNIRQMVADMREKRYVQEGIGSSYLFRVDHDTIIDATKCGNLARFINHCCTPNCYAKVITIESQKKIVIYSKQPIGVDEEITYDYKFPLEDNKIPCLCGTESCRGSLN.

The interaction with WDR82 stretch occupies residues Leu-60 to Gly-89. The RRM domain maps to Asp-84–Lys-172. Disordered regions lie at residues Pro-194–Ala-308, Thr-331–Asp-363, Ser-381–Ser-486, Leu-506–His-655, Ala-834–Lys-854, Pro-891–Val-1251, and Ala-1264–Leu-1293. A compositionally biased stretch (polar residues) spans Asn-239–Gly-277. Low complexity-rich tracts occupy residues Ser-278 to Ser-295 and Thr-331 to Ser-357. Over residues Ser-430–Pro-440 the composition is skewed to pro residues. A phosphoserine mark is found at Ser-459 and Ser-464. The segment covering Ser-459 to Pro-473 has biased composition (low complexity). Residues Glu-474–Ser-486 show a composition bias toward polar residues. 2 positions are modified to phosphoserine: Ser-508 and Ser-565. A compositionally biased stretch (polar residues) spans Ala-568 to Ser-578. 2 stretches are compositionally biased toward pro residues: residues Ser-593–Tyr-617 and Gly-624–His-655. The span at Gln-844–Lys-854 shows a compositional bias: basic and acidic residues. Residue Ser-915 is modified to Phosphoserine. Acidic residues-rich tracts occupy residues Ala-918 to Gln-927 and Lys-976 to Glu-992. Positions Ala-993–Glu-1002 are enriched in basic and acidic residues. Acidic residues predominate over residues Val-1003–Asp-1012. A compositionally biased stretch (low complexity) spans Asp-1032–Ser-1060. Over residues Ala-1077 to Val-1094 the composition is skewed to pro residues. At Ser-1103 the chain carries Phosphoserine. Residues Pro-1127–Pro-1145 are compositionally biased toward pro residues. A compositionally biased stretch (acidic residues) spans Glu-1275–Asp-1284. The HCFC1-binding motif (HBM) motif lies at Glu-1299–Ala-1303. Disordered regions lie at residues Lys-1307–Pro-1417 and Asn-1472–Tyr-1499. Over residues Pro-1308–Ala-1323 the composition is skewed to pro residues. Positions Glu-1360 to Ser-1377 are enriched in acidic residues. A compositionally biased stretch (basic residues) spans Arg-1390 to Pro-1403. Over residues Pro-1404–Ala-1414 the composition is skewed to pro residues. The segment at Tyr-1415 to Leu-1450 is interaction with CFP1. The interval Leu-1450–Arg-1537 is interaction with ASH2L, RBBP5 and WDR5. A WDR5 interaction motif (WIN) motif is present at residues Gly-1492–Glu-1497. The RxxxRR motif motif lies at Arg-1537 to Arg-1542. In terms of domain architecture, SET spans Lys-1568–Lys-1685. Tyr-1684 is an S-adenosyl-L-methionine binding site. The Post-SET domain maps to Asn-1691–Asn-1707.

The protein belongs to the class V-like SAM-binding methyltransferase superfamily. In terms of assembly, component of the SET1A/COMPASS complex composed of the catalytic subunit SETD1A, WDR5, WDR82, RBBP5, ASH2L/ASH2, CXXC1/CFP1, HCFC1 and DPY30 homotrimer. Forms a core complex with the evolutionary conserved subcomplex WRAD composed of WDR5, RBBP5, ASH2L/ASH2 and DPY30 subunits; WRAD differentially stimulates the methyltransferase activity. Interacts with BOD1L1 (via COMPASS-Shg1 domain) at replication forks. Interacts with HCFC1. Interacts with ASH2/ASH2L. Interacts with CXXC1/CFP1. Interacts with RBBP5. Interacts (via N-terminal region) with WDR82; the interaction is direct. Interacts (via the RRM domain) with hyperphosphorylated C-terminal domain (CTD) of RNA polymerase II large subunit (POLR2A) only in the presence of WDR82. Binds specifically to CTD heptad repeats phosphorylated on 'Ser-5' of each heptad. Interacts with ZNF335. Interacts with SUPT6H. Interacts with NAP1L1. Interacts (via WIN motif) with WDR5.

It is found in the nucleus speckle. The protein localises to the chromosome. It localises to the cytoplasm. The catalysed reaction is L-lysyl(4)-[histone H3] + S-adenosyl-L-methionine = N(6)-methyl-L-lysyl(4)-[histone H3] + S-adenosyl-L-homocysteine + H(+). The enzyme catalyses N(6)-methyl-L-lysyl(4)-[histone H3] + S-adenosyl-L-methionine = N(6),N(6)-dimethyl-L-lysyl(4)-[histone H3] + S-adenosyl-L-homocysteine + H(+). It carries out the reaction N(6),N(6)-dimethyl-L-lysyl(4)-[histone H3] + S-adenosyl-L-methionine = N(6),N(6),N(6)-trimethyl-L-lysyl(4)-[histone H3] + S-adenosyl-L-homocysteine + H(+). Functionally, histone methyltransferase that catalyzes methyl group transfer from S-adenosyl-L-methionine to the epsilon-amino group of 'Lys-4' of histone H3 (H3K4) via a non-processive mechanism. Part of chromatin remodeling machinery, forms H3K4me1, H3K4me2 and H3K4me3 methylation marks at active chromatin sites where transcription and DNA repair take place. Responsible for H3K4me3 enriched promoters and transcriptional programming of inner mass stem cells and neuron progenitors during embryogenesis. Required for H3K4me1 mark at stalled replication forks. Mediates FANCD2-dependent nucleosome remodeling and RAD51 nucleofilaments stabilization at reversed forks, protecting them from nucleolytic degradation. Does not methylate 'Lys-4' of histone H3 if the neighboring 'Lys-9' residue is already methylated. Binds RNAs involved in RNA processing and the DNA damage response. The polypeptide is Histone-lysine N-methyltransferase SETD1A (SETD1A) (Homo sapiens (Human)).